The following is a 371-amino-acid chain: UDP-N-acetylglucosamine--N-acetylmuramyl-(pentapeptide) pyrophosphoryl-undecaprenol N-acetylglucosamine transferase (371 aa).

Residues 15-17, N126, R172, S199, I256, 275-280, and Q301 each bind UDP-N-acetyl-alpha-D-glucosamine; these read TGG and ALTVSE.

It belongs to the glycosyltransferase 28 family. MurG subfamily.

The protein resides in the cell inner membrane. The enzyme catalyses di-trans,octa-cis-undecaprenyl diphospho-N-acetyl-alpha-D-muramoyl-L-alanyl-D-glutamyl-meso-2,6-diaminopimeloyl-D-alanyl-D-alanine + UDP-N-acetyl-alpha-D-glucosamine = di-trans,octa-cis-undecaprenyl diphospho-[N-acetyl-alpha-D-glucosaminyl-(1-&gt;4)]-N-acetyl-alpha-D-muramoyl-L-alanyl-D-glutamyl-meso-2,6-diaminopimeloyl-D-alanyl-D-alanine + UDP + H(+). The protein operates within cell wall biogenesis; peptidoglycan biosynthesis. Its function is as follows. Cell wall formation. Catalyzes the transfer of a GlcNAc subunit on undecaprenyl-pyrophosphoryl-MurNAc-pentapeptide (lipid intermediate I) to form undecaprenyl-pyrophosphoryl-MurNAc-(pentapeptide)GlcNAc (lipid intermediate II). This chain is UDP-N-acetylglucosamine--N-acetylmuramyl-(pentapeptide) pyrophosphoryl-undecaprenol N-acetylglucosamine transferase, found in Francisella tularensis subsp. tularensis (strain WY96-3418).